Here is a 201-residue protein sequence, read N- to C-terminus: Large ribosomal subunit protein uL4 (201 aa).

Residues 39 to 72 form a disordered region; that stretch reads RRGTASTKTRAQVSKSGKKMYSQKGTGNARHGDR. The span at 42-53 shows a compositional bias: polar residues; it reads TASTKTRAQVSK.

The protein belongs to the universal ribosomal protein uL4 family. In terms of assembly, part of the 50S ribosomal subunit.

Functionally, one of the primary rRNA binding proteins, this protein initially binds near the 5'-end of the 23S rRNA. It is important during the early stages of 50S assembly. It makes multiple contacts with different domains of the 23S rRNA in the assembled 50S subunit and ribosome. In terms of biological role, forms part of the polypeptide exit tunnel. This chain is Large ribosomal subunit protein uL4, found in Deinococcus deserti (strain DSM 17065 / CIP 109153 / LMG 22923 / VCD115).